Reading from the N-terminus, the 305-residue chain is Dermonecrotic toxin LrSicTox-alphaIA1ii (305 aa).

The signal sequence occupies residues 1–18 (MLLYVTLILGCWSAFSES). Positions 19 to 26 (AETDVAER) are excised as a propeptide. His-37 is an active-site residue. Residues Glu-57 and Asp-59 each coordinate Mg(2+). His-73 (nucleophile) is an active-site residue. Disulfide bonds link Cys-77–Cys-83 and Cys-79–Cys-222. Residue Asp-117 coordinates Mg(2+). A glycan (N-linked (GlcNAc...) asparagine) is linked at Asn-282.

The protein belongs to the arthropod phospholipase D family. Class II subfamily. Class IIa sub-subfamily. The cofactor is Mg(2+). Expressed by the venom gland.

The protein resides in the secreted. The enzyme catalyses an N-(acyl)-sphingosylphosphocholine = an N-(acyl)-sphingosyl-1,3-cyclic phosphate + choline. It carries out the reaction an N-(acyl)-sphingosylphosphoethanolamine = an N-(acyl)-sphingosyl-1,3-cyclic phosphate + ethanolamine. It catalyses the reaction a 1-acyl-sn-glycero-3-phosphocholine = a 1-acyl-sn-glycero-2,3-cyclic phosphate + choline. The catalysed reaction is a 1-acyl-sn-glycero-3-phosphoethanolamine = a 1-acyl-sn-glycero-2,3-cyclic phosphate + ethanolamine. With respect to regulation, inhibited with low affinity by edelfosine. Dermonecrotic toxins cleave the phosphodiester linkage between the phosphate and headgroup of certain phospholipids (sphingolipid and lysolipid substrates), forming an alcohol (often choline) and a cyclic phosphate. This toxin acts on sphingomyelin (SM). It also acts on a broad range of lysophospholipids, like lysophosphatidylinositol (LPI), lysophosphatidylglycerol (LPG), lysophosphatidylethanolamine (LPE), lysobisphosphatidic acid (LBPA), lysophosphatidylserine (LPS) and lysophosphatidylcholines (LPC) of varying chain lengths. The substrate preference is LPI &gt; LPG &gt; LPS &gt; LPC &gt;&gt; LPE, LBPA. Furthermore, the enzyme also act on cyclic phosphatidic acid and lyso-platelet activating factor (LPAF, an alkyl-LPC). The enzyme does not act on sphingosylphosphorylcholine (SPC, also known as lyso-sphingomyelin) and PAF. The toxin may also act on ceramide phosphoethanolamine (CPE). It acts by transphosphatidylation, releasing exclusively cyclic phosphate products as second products. It does not exhibit detectable PLA1/2 activity. It induces dose-dependent hemolysis and dermonecrosis. Also induces increased vascular permeability, edema, inflammatory response, and platelet aggregation. This is Dermonecrotic toxin LrSicTox-alphaIA1ii from Loxosceles reclusa (Brown recluse spider).